The chain runs to 449 residues: Glutamyl-tRNA reductase (449 aa).

Substrate is bound by residues 58-61, serine 121, 126-128, and glutamine 132; these read TCNR and ETQ. The active-site Nucleophile is cysteine 59. 203–208 serves as a coordination point for NADP(+); sequence GLGEMA.

This sequence belongs to the glutamyl-tRNA reductase family. In terms of assembly, homodimer.

It carries out the reaction (S)-4-amino-5-oxopentanoate + tRNA(Glu) + NADP(+) = L-glutamyl-tRNA(Glu) + NADPH + H(+). It functions in the pathway porphyrin-containing compound metabolism; protoporphyrin-IX biosynthesis; 5-aminolevulinate from L-glutamyl-tRNA(Glu): step 1/2. Its function is as follows. Catalyzes the NADPH-dependent reduction of glutamyl-tRNA(Glu) to glutamate 1-semialdehyde (GSA). The polypeptide is Glutamyl-tRNA reductase (Helicobacter pylori (strain Shi470)).